A 293-amino-acid polypeptide reads, in one-letter code: Ribonuclease HIII (293 aa).

Positions 78-293 (LPLIGTDEVG…TEKAKKRLER (216 aa)) constitute an RNase H type-2 domain. Residues Asp84, Glu85, and Asp187 each coordinate a divalent metal cation.

It belongs to the RNase HII family. RnhC subfamily. It depends on Mn(2+) as a cofactor. Mg(2+) is required as a cofactor.

It localises to the cytoplasm. The enzyme catalyses Endonucleolytic cleavage to 5'-phosphomonoester.. In terms of biological role, endonuclease that specifically degrades the RNA of RNA-DNA hybrids. This Streptococcus pneumoniae (strain 70585) protein is Ribonuclease HIII.